The following is a 513-amino-acid chain: Maturase K (513 aa).

Belongs to the intron maturase 2 family. MatK subfamily.

The protein resides in the plastid. The protein localises to the chloroplast. Its function is as follows. Usually encoded in the trnK tRNA gene intron. Probably assists in splicing its own and other chloroplast group II introns. This Sporobolus indicus (Smut grass) protein is Maturase K.